The primary structure comprises 300 residues: Ribonuclease HIII (300 aa).

One can recognise an RNase H type-2 domain in the interval 86-300 (RPRLGVDESG…FNEICDSASA (215 aa)). A divalent metal cation contacts are provided by Asp92, Glu93, and Asp196.

The protein belongs to the RNase HII family. RnhC subfamily. Requires Mn(2+) as cofactor. It depends on Mg(2+) as a cofactor.

It is found in the cytoplasm. The catalysed reaction is Endonucleolytic cleavage to 5'-phosphomonoester.. Endonuclease that specifically degrades the RNA of RNA-DNA hybrids. This chain is Ribonuclease HIII, found in Chlamydia caviae (strain ATCC VR-813 / DSM 19441 / 03DC25 / GPIC) (Chlamydophila caviae).